Reading from the N-terminus, the 346-residue chain is MTEPQGPLDTIPKVNYPPILTIANYFSTKQMIDQVISEDQDYVTWKLQNLRTGGTSINNQLNKYPKYKYQKTRINQQDPDSINKVPENLIFPQDILQQQTQNSNYEDTNTNEDENEKLAQDEQFKLLVTNLDKDQTNRFEVFHRTSLNKTQVKKLASTVANQTISENIRVFLQAVGKIYAGEIIELAMIVKNKWLTSQMCIEFDKRTKIGYKLKKYLKKLTFSIIENQQYKQDYQSDSVPEDEPDFYFDDEEVDKRETTLGNSLLQSKSLQQSDHNSQDLKLQLIEQYNKLVLQFNKLDVSIEKYNNSPLLPEHIREAWRLYRLQSDTLPNAYWRTQGEGQGSMFR.

The Histone-fold domain maps to 131 to 329 (LDKDQTNRFE…RLYRLQSDTL (199 aa)). A phosphoserine mark is found at Ser236 and Ser238.

This sequence belongs to the TAF11 family. TAF11 heterodimerizes with TAF13, but they do not seem to form a heterotetramer like TAF6/TAF9. The 1.2 MDa TFIID complex is composed of TATA binding protein (TBP) and the 14 TBP-associated factors (one copy of each TAF1, TAF2, TAF3, TAF7, TAF8, TAF11, TAF13, two copies of each TAF4, TAF5, TAF6, TAF9, TAF10, TAF12, and three copies of TAF14), ranging in size from 17 to 150 kDa.

The protein resides in the nucleus. Its function is as follows. Functions as a component of the DNA-binding general transcription factor complex TFIID. Binding of TFIID to a promoter (with or without TATA element) is the initial step in pre-initiation complex (PIC) formation. TFIID plays a key role in the regulation of gene expression by RNA polymerase II through different activities such as transcription activator interaction, core promoter recognition and selectivity, TFIIA and TFIIB interaction, chromatin modification (histone acetylation by TAF1), facilitation of DNA opening and initiation of transcription. This Saccharomyces cerevisiae (strain ATCC 204508 / S288c) (Baker's yeast) protein is Transcription initiation factor TFIID subunit 11 (TAF11).